Reading from the N-terminus, the 927-residue chain is Solute carrier family 12 protein B0303.11 (927 aa).

At 1–23 the chain is on the cytoplasmic side; that stretch reads MPSSTASSEDAPITSTAWMNWKD. Residues 24–44 form a helical membrane-spanning segment; it reads VFLKCVQPMLAVVLLLRFSSI. Over 45 to 53 the chain is Extracellular; sequence VDEAGFTTT. The helical transmembrane segment at 54-74 threads the bilayer; the sequence is IILVFFTFLVSLVTGWSACTV. Residues 75–95 are Cytoplasmic-facing; the sequence is VSRKSSEVGFVKTMLAYSSTE. A helical transmembrane segment spans residues 96 to 116; it reads FAISFSIIYLFCLLVATSTFL. The Extracellular segment spans residues 117–141; the sequence is TSAAEAVLHIFSTFSLELLDGATHD. Residues 142–159 traverse the membrane as a helical segment; it reads LRLVSSVLSLITLALCMV. The Cytoplasmic segment spans residues 160 to 165; that stretch reads RNRNAR. Residues 166-186 form a helical membrane-spanning segment; the sequence is FVRTFIFALTCIAIALQLSSV. The Extracellular segment spans residues 187 to 212; that stretch reads MFRYGEYQLRRVSDRNAMIPSPPNEE. The chain crosses the membrane as a helical span at residues 213 to 233; sequence ISTIFAQLFPAAMCGLTILNI. At 234-244 the chain is on the cytoplasmic side; it reads GSKLQNTAPRG. Residues 245–265 traverse the membrane as a helical segment; the sequence is ALIAIAVSACFYGAAAMLDYV. Topologically, residues 266 to 284 are extracellular; that stretch reads EFFARTSTSNSTGSAEYNE. N-linked (GlcNAc...) asparagine glycosylation occurs at Asn275. A helical membrane pass occupies residues 285–305; it reads FLSYIYTTVPMAIVITLACVL. Residues 306–345 lie on the Cytoplasmic side of the membrane; it reads SAVSTLKYAAVILQSLGRSNQCRCILWLAKGFGERDIPIR. A helical membrane pass occupies residues 346-366; sequence CLLLLSTVQILVSAIGSYDIL. A topological domain (extracellular) is located at residue Cys367. A helical transmembrane segment spans residues 368 to 388; the sequence is IPTTVFYLFAYALFNFYVFLV. Topologically, residues 389-394 are cytoplasmic; that stretch reads KLSDPE. Residues 395 to 415 traverse the membrane as a helical segment; sequence IPSPPTLLSLAISAACFIASL. Over 416-419 the chain is Extracellular; sequence YTNR. The chain crosses the membrane as a helical span at residues 420–440; the sequence is HLALFIASIFAISYCSLLYII. Topologically, residues 441–927 are cytoplasmic; the sequence is RRERNEDGEE…SMSALRLKFP (487 aa).

It belongs to the SLC12A transporter family.

It localises to the cell membrane. This Caenorhabditis elegans protein is Solute carrier family 12 protein B0303.11.